The primary structure comprises 37 residues: Large ribosomal subunit protein bL36c (37 aa).

It belongs to the bacterial ribosomal protein bL36 family.

It localises to the plastid. Its subcellular location is the chloroplast. This chain is Large ribosomal subunit protein bL36c, found in Chara vulgaris (Common stonewort).